The chain runs to 257 residues: MEFPDLGAHCSEPSCQRLDFLPLKCDACSGIFCADHVAYAQHHCGSAYQKDIQVPVCPLCNVPVPVARGEPPDRAVGEHIDRDCRSDPAQQKRKIFTNKCERSGCRQREMMKLTCDRCGRNFCIKHRHPLDHECSGEGHQTSRAGLAAISRAQGLASTSTAPSPSRTLPSSSSPSRATPQLPTRTASPVIALQNGLSEDEALQRALELSLAEAKPQVLSSQEEDDLALAQALSASEAEYQQQQAQSRSLKPSNCSLC.

AN1-type zinc fingers lie at residues 4–52 (PDLG…QKDI) and 94–142 (KIFT…HQTS). 16 residues coordinate Zn(2+): C10, C15, C25, C28, C33, H36, H42, C44, C100, C105, C115, C118, C123, H126, H132, and C134. A VCP/p97-interacting motif (VIM) region spans residues 141–151 (TSRAGLAAISR). The tract at residues 152–184 (AQGLASTSTAPSPSRTLPSSSSPSRATPQLPTR) is disordered. Low complexity predominate over residues 155–179 (LASTSTAPSPSRTLPSSSSPSRATP). 3 positions are modified to phosphoserine; by MAPK14: S163, S173, and S187. 2 UIM domains span residues 197-216 (SEDE…AKPQ) and 221-240 (QEED…AEYQ). C254 carries the cysteine methyl ester modification. C254 is lipidated: S-geranylgeranyl cysteine. Residues 254–257 (CSLC) carry the CAAX motif motif. A propeptide spans 255 to 257 (SLC) (removed in mature form).

Binds 'Lys-48'-linked polyubiquitin chains of ubiquitinated proteins. Associates with the proteasome complex; upon exposure to arsenite. Interacts (via VIM motif) with VCP; the interaction is direct. Interacts with BAG6. Interacts with IGF1R (nascent precursor form). Interacts with DERL1, FAF2, NPLOC4 and UFD1; probably through VCP. In terms of processing, phosphorylated by MAPK14. Phosphorylation has no effect on association with the proteasome complex.

The protein localises to the endoplasmic reticulum membrane. In terms of biological role, plays a role in protein homeostasis by regulating both the translocation and the ubiquitin-mediated proteasomal degradation of nascent proteins at the endoplasmic reticulum. It is involved in the regulation of signal-mediated translocation of proteins into the endoplasmic reticulum. It also plays a role in the ubiquitin-mediated proteasomal degradation of proteins for which signal-mediated translocation to the endoplasmic reticulum has failed. May therefore function in the endoplasmic reticulum stress-induced pre-emptive quality control, a mechanism that selectively attenuates the translocation of newly synthesized proteins into the endoplasmic reticulum and reroutes them to the cytosol for proteasomal degradation. By controlling the steady-state expression of the IGF1R receptor, indirectly regulates the insulin-like growth factor receptor signaling pathway. This chain is AN1-type zinc finger protein 2B, found in Mus musculus (Mouse).